The following is a 383-amino-acid chain: Paralemmin-1 (383 aa).

Met1 carries the N-acetylmethionine modification. The stretch at 5-102 (ATDTASQQER…KEIDVLEFGE (98 aa)) forms a coiled coil. Disordered regions lie at residues 51–163 (RERW…GSTM), 242–295 (TLSE…GQEP), and 334–375 (ATPR…MKKP). Residues 69-96 (DMRKQMQEDEQKARGLEESITRLEKEID) show a composition bias toward basic and acidic residues. Composition is skewed to polar residues over residues 109 to 124 (KENS…QSAS) and 133 to 143 (ETLVNAQQTPL). A phosphoserine mark is found at Ser116, Ser122, and Ser124. Phosphothreonine occurs at positions 141, 145, and 153. A phosphoserine mark is found at Ser157 and Ser161. Phosphothreonine is present on Thr242. Ser244 is subject to Phosphoserine. Over residues 257-273 (GLAEDVTRTTPSRREIT) the composition is skewed to basic and acidic residues. Low complexity predominate over residues 285 to 295 (GPPGIQPGQEP). Ser345 is modified (phosphoserine). Residues 357–367 (QTGPTTTPSDT) show a composition bias toward polar residues. Phosphothreonine occurs at positions 361, 362, and 363. Ser365 carries the post-translational modification Phosphoserine. Thr367 is modified (phosphothreonine). 2 S-palmitoyl cysteine lipidation sites follow: Cys377 and Cys379. Cysteine methyl ester is present on Cys380. Cys380 is lipidated: S-farnesyl cysteine. The propeptide at 381–383 (SVM) is removed in mature form.

Belongs to the paralemmin family. In terms of assembly, interacts with dopamine receptor DRD3. As to expression, expression is highest in brain, intermediate in adrenal gland and kidney, and much lower or undetectable in other tissues. Isoform 1 is the predominant isoform in most tissues except brain and kidney where isoform 2 predominates.

The protein localises to the cell membrane. It localises to the cell projection. Its subcellular location is the filopodium membrane. It is found in the axon. The protein resides in the dendrite. The protein localises to the dendritic spine. It localises to the basolateral cell membrane. Its subcellular location is the apicolateral cell membrane. In terms of biological role, involved in plasma membrane dynamics and cell process formation. Isoform 1 and isoform 2 are necessary for axonal and dendritic filopodia induction, for dendritic spine maturation and synapse formation in a palmitoylation-dependent manner. In Mus musculus (Mouse), this protein is Paralemmin-1 (Palm).